Consider the following 25-residue polypeptide: Defensin D3 (25 aa).

Belongs to the DEFL family. Group IV subfamily. As to expression, distributed in the epidermal cell layer of leaves and in the subepidermal layer region of stems. Not in roots.

The protein localises to the secreted. It is found in the cell wall. Antimicrobial peptide. Active against Fusarium spp., Gram-positive and Gram-negative bacterial pathogens. This chain is Defensin D3, found in Spinacia oleracea (Spinach).